Consider the following 410-residue polypeptide: Iron-sulfur cluster assembly SufBD family protein MTH1150 homolog (410 aa).

This sequence belongs to the iron-sulfur cluster assembly SufBD family.

In Methanothermobacter thermautotrophicus (strain Winter) (Methanobacterium thermoautotrophicum), this protein is Iron-sulfur cluster assembly SufBD family protein MTH1150 homolog.